The chain runs to 191 residues: Calcium-activated potassium channel subunit beta-1 (191 aa).

Residues 1–15 (MGKKLVMAQKRGETR) are Cytoplasmic-facing. A helical transmembrane segment spans residues 16–36 (ALCLGVAMVMCAVITYYILGT). Over 37–157 (TMLPLYQKSV…YQRLYGPQAL (121 aa)) the chain is Extracellular. Residues Asn-80 and Asn-142 are each glycosylated (N-linked (GlcNAc...) asparagine). A helical membrane pass occupies residues 158–178 (LASLFWPTFLLTGGLLIIAMV). Residues 179–191 (KINRSLSILAAQK) lie on the Cytoplasmic side of the membrane.

This sequence belongs to the KCNMB (TC 8.A.14.1) family. KCNMB1 subfamily. Interacts with KCNMA1 tetramer. There are probably 4 molecules of KCMNB1 per KCNMA1 tetramer. In terms of processing, N-glycosylated.

It localises to the membrane. Its function is as follows. Regulatory subunit of the calcium activated potassium KCNMA1 (maxiK) channel. Modulates the calcium sensitivity and gating kinetics of KCNMA1, thereby contributing to KCNMA1 channel diversity. Increases the apparent Ca(2+)/voltage sensitivity of the KCNMA1 channel. It also modifies KCNMA1 channel kinetics and alters its pharmacological properties. It slows down the activation and the deactivation kinetics of the channel. Acts as a negative regulator of smooth muscle contraction by enhancing the calcium sensitivity to KCNMA1. Its presence is also a requirement for internal binding of the KCNMA1 channel opener dehydrosoyasaponin I (DHS-1) triterpene glycoside and for external binding of the agonist hormone 17-beta-estradiol (E2). Increases the binding activity of charybdotoxin (CTX) toxin to KCNMA1 peptide blocker by increasing the CTX association rate and decreasing the dissociation rate. This is Calcium-activated potassium channel subunit beta-1 (KCNMB1) from Oryctolagus cuniculus (Rabbit).